Consider the following 263-residue polypeptide: uncharacterized protein (263 aa).

17–41 (GGGRGLGAAIALAFAQAGADVLIAS) contributes to the NAD(+) binding site. Serine 147 contributes to the substrate binding site. Residue tyrosine 160 is the Proton acceptor of the active site. Lysine 164 contributes to the NAD(+) binding site.

Belongs to the short-chain dehydrogenases/reductases (SDR) family.

This is an uncharacterized protein from Mycobacterium tuberculosis (strain CDC 1551 / Oshkosh).